The following is a 58-amino-acid chain: Conotoxin TxXIIIA (58 aa).

A signal peptide spans 1 to 22 (MRCLPVFVILLLLIASVPSVDA). Positions 23–46 (ELKAKDDMPQASFHDNAERDQQKK) are excised as a propeptide.

As to quaternary structure, homodimer; disulfide-linked. In terms of processing, 5 disulfide bonds are present in each homodimer: two intrachain disulfide bonds per subunit, and one interchain disulfide bond linking the two subunits. Expressed by the venom duct.

It localises to the secreted. The protein is Conotoxin TxXIIIA of Conus textile (Cloth-of-gold cone).